We begin with the raw amino-acid sequence, 289 residues long: Protease HtpX homolog (289 aa).

A run of 2 helical transmembrane segments spans residues 8-28 and 29-49; these read LALL…VIGG and SSGL…SWYQ. Position 132 (histidine 132) interacts with Zn(2+). Residue glutamate 133 is part of the active site. Histidine 136 is a binding site for Zn(2+). The next 2 helical transmembrane spans lie at 151-171 and 183-203; these read VAGA…FGGI and LGVL…QLAI. Glutamate 208 contributes to the Zn(2+) binding site.

Belongs to the peptidase M48B family. The cofactor is Zn(2+).

The protein localises to the cell inner membrane. This is Protease HtpX homolog from Trichormus variabilis (strain ATCC 29413 / PCC 7937) (Anabaena variabilis).